Here is a 465-residue protein sequence, read N- to C-terminus: Plasma alpha-L-fucosidase (465 aa).

A signal peptide spans 1–26 (MRPQELPRLAFPLLLLLLLPPPPCPA). N-linked (GlcNAc...) asparagine glycosylation is found at Asn169 and Asn237. Ser299 carries the post-translational modification Phosphoserine. Asn375 carries N-linked (GlcNAc...) asparagine glycosylation.

Belongs to the glycosyl hydrolase 29 family. Homotetramer.

The protein localises to the secreted. It carries out the reaction an alpha-L-fucoside + H2O = L-fucose + an alcohol. Its function is as follows. Alpha-L-fucosidase is responsible for hydrolyzing the alpha-1,6-linked fucose joined to the reducing-end N-acetylglucosamine of the carbohydrate moieties of glycoproteins. This Pongo abelii (Sumatran orangutan) protein is Plasma alpha-L-fucosidase (FUCA2).